The sequence spans 716 residues: Fatty acid oxidation complex subunit alpha (716 aa).

The tract at residues 1–189 (MIYQSPTIQV…KVGAIDAVVA (189 aa)) is enoyl-CoA hydratase/isomerase. Aspartate 296 contributes to the substrate binding site. The interval 311-716 (KNIDTAAVLG…AANNGSYYQS (406 aa)) is 3-hydroxyacyl-CoA dehydrogenase. NAD(+)-binding positions include methionine 324, aspartate 343, 400-402 (VVE), lysine 407, and serine 429. The For 3-hydroxyacyl-CoA dehydrogenase activity role is filled by histidine 450. Residue asparagine 453 participates in NAD(+) binding. Residue asparagine 500 participates in substrate binding.

The protein in the N-terminal section; belongs to the enoyl-CoA hydratase/isomerase family. This sequence in the C-terminal section; belongs to the 3-hydroxyacyl-CoA dehydrogenase family. In terms of assembly, heterotetramer of two alpha chains (FadB) and two beta chains (FadA).

The enzyme catalyses a (3S)-3-hydroxyacyl-CoA + NAD(+) = a 3-oxoacyl-CoA + NADH + H(+). The catalysed reaction is a (3S)-3-hydroxyacyl-CoA = a (2E)-enoyl-CoA + H2O. It catalyses the reaction a 4-saturated-(3S)-3-hydroxyacyl-CoA = a (3E)-enoyl-CoA + H2O. It carries out the reaction (3S)-3-hydroxybutanoyl-CoA = (3R)-3-hydroxybutanoyl-CoA. The enzyme catalyses a (3Z)-enoyl-CoA = a 4-saturated (2E)-enoyl-CoA. The catalysed reaction is a (3E)-enoyl-CoA = a 4-saturated (2E)-enoyl-CoA. Its pathway is lipid metabolism; fatty acid beta-oxidation. Functionally, involved in the aerobic and anaerobic degradation of long-chain fatty acids via beta-oxidation cycle. Catalyzes the formation of 3-oxoacyl-CoA from enoyl-CoA via L-3-hydroxyacyl-CoA. It can also use D-3-hydroxyacyl-CoA and cis-3-enoyl-CoA as substrate. In Shewanella sediminis (strain HAW-EB3), this protein is Fatty acid oxidation complex subunit alpha.